The following is a 426-amino-acid chain: Spermidine/putrescine import ATP-binding protein PotA (426 aa).

The 233-residue stretch at 6–238 (IEFKNVSKTY…PINHFVADFI (233 aa)) folds into the ABC transporter domain. 40–47 (GASGSGKS) contacts ATP.

It belongs to the ABC transporter superfamily. Spermidine/putrescine importer (TC 3.A.1.11.1) family. In terms of assembly, the complex is composed of two ATP-binding proteins (PotA), two transmembrane proteins (PotB and PotC) and a solute-binding protein (PotD).

It is found in the cell membrane. It carries out the reaction ATP + H2O + polyamine-[polyamine-binding protein]Side 1 = ADP + phosphate + polyamineSide 2 + [polyamine-binding protein]Side 1.. Functionally, part of the ABC transporter complex PotABCD involved in spermidine/putrescine import. Responsible for energy coupling to the transport system. This is Spermidine/putrescine import ATP-binding protein PotA from Lactococcus lactis subsp. cremoris (strain SK11).